The following is a 158-amino-acid chain: 2-C-methyl-D-erythritol 2,4-cyclodiphosphate synthase (158 aa).

Positions 9 and 11 each coordinate a divalent metal cation. 4-CDP-2-C-methyl-D-erythritol 2-phosphate is bound by residues 9–11 (DVH) and 35–36 (HS). Residue His43 coordinates a divalent metal cation. 4-CDP-2-C-methyl-D-erythritol 2-phosphate is bound by residues 57 to 59 (DIG), 62 to 66 (FPDTD), 101 to 107 (AQKPKMA), 133 to 136 (TTTE), Phe140, and Arg143.

Belongs to the IspF family. In terms of assembly, homotrimer. A divalent metal cation is required as a cofactor.

It carries out the reaction 4-CDP-2-C-methyl-D-erythritol 2-phosphate = 2-C-methyl-D-erythritol 2,4-cyclic diphosphate + CMP. Its pathway is isoprenoid biosynthesis; isopentenyl diphosphate biosynthesis via DXP pathway; isopentenyl diphosphate from 1-deoxy-D-xylulose 5-phosphate: step 4/6. Functionally, involved in the biosynthesis of isopentenyl diphosphate (IPP) and dimethylallyl diphosphate (DMAPP), two major building blocks of isoprenoid compounds. Catalyzes the conversion of 4-diphosphocytidyl-2-C-methyl-D-erythritol 2-phosphate (CDP-ME2P) to 2-C-methyl-D-erythritol 2,4-cyclodiphosphate (ME-CPP) with a corresponding release of cytidine 5-monophosphate (CMP). This chain is 2-C-methyl-D-erythritol 2,4-cyclodiphosphate synthase, found in Bacillus cereus (strain ATCC 10987 / NRS 248).